The sequence spans 144 residues: Large ribosomal subunit protein uL13 (144 aa).

The protein belongs to the universal ribosomal protein uL13 family. In terms of assembly, part of the 50S ribosomal subunit.

In terms of biological role, this protein is one of the early assembly proteins of the 50S ribosomal subunit, although it is not seen to bind rRNA by itself. It is important during the early stages of 50S assembly. The polypeptide is Large ribosomal subunit protein uL13 (Syntrophomonas wolfei subsp. wolfei (strain DSM 2245B / Goettingen)).